Here is a 184-residue protein sequence, read N- to C-terminus: Inosine triphosphate pyrophosphatase (184 aa).

Residue 9–14 (TSNASK) participates in ITP binding. Glu-38 is a binding site for Mg(2+). ITP-binding positions include Lys-50, 66 to 67 (DT), Lys-83, 142 to 145 (FGWD), Lys-163, and 168 to 169 (HR).

This sequence belongs to the HAM1 NTPase family. In terms of assembly, homodimer. Mg(2+) is required as a cofactor. It depends on Mn(2+) as a cofactor.

The protein localises to the cytoplasm. It is found in the nucleus. It catalyses the reaction ITP + H2O = IMP + diphosphate + H(+). The enzyme catalyses dITP + H2O = dIMP + diphosphate + H(+). It carries out the reaction XTP + H2O = XMP + diphosphate + H(+). Functionally, pyrophosphatase that hydrolyzes non-canonical purine nucleotides such as inosine triphosphate (ITP), deoxyinosine triphosphate (dITP) or xanthosine 5'-triphosphate (XTP) to their respective monophosphate derivatives. The enzyme does not distinguish between the deoxy- and ribose forms. Probably excludes non-canonical purines from RNA and DNA precursor pools, thus preventing their incorporation into RNA and DNA and avoiding chromosomal lesions. The sequence is that of Inosine triphosphate pyrophosphatase from Tuber melanosporum (strain Mel28) (Perigord black truffle).